A 371-amino-acid polypeptide reads, in one-letter code: Aminomethyltransferase (371 aa).

Belongs to the GcvT family. In terms of assembly, the glycine cleavage system is composed of four proteins: P, T, L and H.

The catalysed reaction is N(6)-[(R)-S(8)-aminomethyldihydrolipoyl]-L-lysyl-[protein] + (6S)-5,6,7,8-tetrahydrofolate = N(6)-[(R)-dihydrolipoyl]-L-lysyl-[protein] + (6R)-5,10-methylene-5,6,7,8-tetrahydrofolate + NH4(+). Its function is as follows. The glycine cleavage system catalyzes the degradation of glycine. The sequence is that of Aminomethyltransferase from Nitrosococcus oceani (strain ATCC 19707 / BCRC 17464 / JCM 30415 / NCIMB 11848 / C-107).